Reading from the N-terminus, the 405-residue chain is LanC-like protein GCL2 (405 aa).

Residues Cys-278, Cys-323, and His-324 each contribute to the Zn(2+) site.

Belongs to the LanC-like protein family.

May play a role in signaling. May be not involved in abscisic acid (ABA) signaling. This chain is LanC-like protein GCL2 (GCL2), found in Arabidopsis thaliana (Mouse-ear cress).